We begin with the raw amino-acid sequence, 269 residues long: Peptide deformylase 1B, chloroplastic (269 aa).

The N-terminal 51 residues, 1–51, are a transit peptide targeting the chloroplast; the sequence is MAARLHLRLGPRLRGFASSFAPLLAAHPRALPLSRMGSVAPLAAARARRGF. The Fe cation site is built by Cys168 and His210. Residue Glu211 is part of the active site. A Fe cation-binding site is contributed by His214.

This sequence belongs to the polypeptide deformylase family. In terms of assembly, homodimer. Fe(2+) is required as a cofactor. In terms of tissue distribution, mainly expressed in mature leaves and sheaths.

It is found in the plastid. The protein resides in the chloroplast stroma. It localises to the mitochondrion. The enzyme catalyses N-terminal N-formyl-L-methionyl-[peptide] + H2O = N-terminal L-methionyl-[peptide] + formate. Inhibited by actinonin. In terms of biological role, removes the formyl group from the N-terminal Met of newly synthesized proteins. The sequence is that of Peptide deformylase 1B, chloroplastic (PDF1B) from Oryza sativa subsp. japonica (Rice).